The chain runs to 673 residues: UvrABC system protein B (673 aa).

The region spanning glutamate 26–arginine 183 is the Helicase ATP-binding domain. Residue glycine 39–threonine 46 coordinates ATP. Positions tyrosine 92 to valine 115 match the Beta-hairpin motif. The Helicase C-terminal domain maps to glutamine 431–leucine 597. Positions glutamine 633 to leucine 668 constitute a UVR domain.

Belongs to the UvrB family. In terms of assembly, forms a heterotetramer with UvrA during the search for lesions. Interacts with UvrC in an incision complex.

Its subcellular location is the cytoplasm. Its function is as follows. The UvrABC repair system catalyzes the recognition and processing of DNA lesions. A damage recognition complex composed of 2 UvrA and 2 UvrB subunits scans DNA for abnormalities. Upon binding of the UvrA(2)B(2) complex to a putative damaged site, the DNA wraps around one UvrB monomer. DNA wrap is dependent on ATP binding by UvrB and probably causes local melting of the DNA helix, facilitating insertion of UvrB beta-hairpin between the DNA strands. Then UvrB probes one DNA strand for the presence of a lesion. If a lesion is found the UvrA subunits dissociate and the UvrB-DNA preincision complex is formed. This complex is subsequently bound by UvrC and the second UvrB is released. If no lesion is found, the DNA wraps around the other UvrB subunit that will check the other stand for damage. The chain is UvrABC system protein B from Enterobacter sp. (strain 638).